The primary structure comprises 494 residues: Lysine--tRNA ligase (494 aa).

Glu405 and Glu412 together coordinate Mg(2+).

It belongs to the class-II aminoacyl-tRNA synthetase family. Homodimer. It depends on Mg(2+) as a cofactor.

It is found in the cytoplasm. It carries out the reaction tRNA(Lys) + L-lysine + ATP = L-lysyl-tRNA(Lys) + AMP + diphosphate. The polypeptide is Lysine--tRNA ligase (lysS) (Geobacillus stearothermophilus (Bacillus stearothermophilus)).